The following is a 193-amino-acid chain: Ribosomal RNA small subunit methyltransferase G (193 aa).

S-adenosyl-L-methionine-binding positions include G72, F77, 123–124 (IE), and R137.

This sequence belongs to the methyltransferase superfamily. RNA methyltransferase RsmG family.

Its subcellular location is the cytoplasm. It carries out the reaction guanosine(527) in 16S rRNA + S-adenosyl-L-methionine = N(7)-methylguanosine(527) in 16S rRNA + S-adenosyl-L-homocysteine. Functionally, specifically methylates the N7 position of guanine in position 527 of 16S rRNA. The chain is Ribosomal RNA small subunit methyltransferase G from Wolinella succinogenes (strain ATCC 29543 / DSM 1740 / CCUG 13145 / JCM 31913 / LMG 7466 / NCTC 11488 / FDC 602W) (Vibrio succinogenes).